The primary structure comprises 2931 residues: Probable polyketide synthase 9/36 (2931 aa).

A Ketosynthase family 3 (KS3) domain is found at 11–442 (EKGVAIVGIG…GSNCCLLISE (432 aa)). Active-site for beta-ketoacyl synthase activity residues include Cys-181, His-323, and His-362. Positions 635-668 (GVNPSFILGHSLGEISASYCSGMIDLDTFCYTVY) are acyl/malonyl transferase. Residue Ser-645 is the For acyl/malonyl transferase activity of the active site. The N-terminal hotdog fold stretch occupies residues 925-1047 (IDHLGTSNSY…ANFQLLDHGN (123 aa)). A PKS/mFAS DH domain is found at 925-1209 (IDHLGTSNSY…CKSLIPIKDS (285 aa)). Catalysis depends on His-959, which acts as the Proton acceptor; for dehydratase activity. A C-terminal hotdog fold region spans residues 1064–1209 (NLSKLTKNEL…CKSLIPIKDS (146 aa)). The Proton donor; for dehydratase activity role is filled by Asp-1122. The helical transmembrane segment at 2293–2313 (LINFVMASSAISLIGSTDLCT) threads the bilayer. The region spanning 2429 to 2506 (TGNKNIDELF…TSMKMILNSL (78 aa)) is the Carrier domain. Residue Ser-2466 is modified to O-(pantetheine 4'-phosphoryl)serine. The helical transmembrane segment at 2553 to 2573 (KIILLTGTTGFLGGFLLFNMV) threads the bilayer.

The cofactor is pantetheine 4'-phosphate.

The protein localises to the membrane. In terms of biological role, probable polyketide synthase. The polypeptide is Probable polyketide synthase 9/36 (pks9) (Dictyostelium discoideum (Social amoeba)).